Consider the following 153-residue polypeptide: Troponin C (153 aa).

EF-hand domains follow at residues 9 to 44 (EQVQMLRKAFDMFDRDKKGYIHTNMVSTILRTLGQT), 45 to 80 (FEENDLQQLIIEIDADGSGELEFDEFLTLTARFLVE), 85 to 120 (AMQEELREAFRMYDKEGNGYIPTSALREILRALDDK), and 121 to 153 (LTEDELDEMIAEIDTDGSGTVDFDEFMEMMTGD). Ca(2+) is bound by residues aspartate 58, aspartate 60, serine 62, glutamate 64, and glutamate 69. Ca(2+)-binding residues include aspartate 134, aspartate 136, serine 138, threonine 140, and glutamate 145.

This sequence belongs to the troponin C family.

Its function is as follows. Troponin is the central regulatory protein of striated muscle contraction. Tn consists of three components: Tn-I which is the inhibitor of actomyosin ATPase, Tn-T which contains the binding site for tropomyosin and Tn-C. The binding of calcium to Tn-C abolishes the inhibitory action of Tn on actin filaments. This is Troponin C from Tyrophagus putrescentiae (Mold mite).